Reading from the N-terminus, the 388-residue chain is Diacylglycerol O-acyltransferase 2 (388 aa).

The Cytoplasmic segment spans residues 1-69; sequence MKTLIAAYSG…NRSKVEKQLQ (69 aa). The tract at residues 16 to 40 is disordered; it reads RQAEADRSQRSHGGPALSREGSGRW. Residues 70-88 traverse the membrane as a helical segment; that stretch reads VISVLQWVLSFLVLGVACS. The Lumenal segment spans residues 89–92; it reads AILM. A helical membrane pass occupies residues 93–112; it reads YIFCTDCWLIAVLYFTWLVF. Residues 113–388 are Cytoplasmic-facing; it reads DWNTPKKGGR…LPETEVLEVN (276 aa).

This sequence belongs to the diacylglycerol acyltransferase family. Forms multimeric complexes consisting of several DGAT2 subunits. Interacts with SLC27A1 and this interaction is enhanced in the presence of ZFYVE1. Predominantly expressed in liver and white adipose tissue. Expressed at lower level in mammary gland, testis and peripheral blood leukocytes. Expressed in sebaceous glands of normal skin but decreased psoriatic skin.

It is found in the endoplasmic reticulum membrane. The protein resides in the lipid droplet. The protein localises to the cytoplasm. It localises to the perinuclear region. It carries out the reaction an acyl-CoA + a 1,2-diacyl-sn-glycerol = a triacyl-sn-glycerol + CoA. It catalyses the reaction all-trans-retinol + an acyl-CoA = an all-trans-retinyl ester + CoA. The catalysed reaction is 2-(9Z-octadecenoyl)-glycerol + (9Z)-octadecenoyl-CoA = 1,2-di-(9Z-octadecenoyl)-sn-glycerol + CoA. The enzyme catalyses 1,2-di-(9Z-octadecenoyl)-sn-glycerol + (9Z)-octadecenoyl-CoA = 1,2,3-tri-(9Z-octadecenoyl)-glycerol + CoA. It carries out the reaction all-trans-retinol + hexadecanoyl-CoA = all-trans-retinyl hexadecanoate + CoA. It catalyses the reaction 1-O-(9Z-octadecenyl)-glycerol + (9Z)-octadecenoyl-CoA = 1-O-(9Z-octadecyl)-3-(9Z-octadecenoyl)-glycerol + CoA. The catalysed reaction is 1-(9Z-octadecenoyl)-glycerol + (9Z)-octadecenoyl-CoA = 1,2-di-(9Z-octadecenoyl)-glycerol + CoA. The enzyme catalyses 1,2-di-(9Z-octadecenoyl)-sn-glycerol + hexadecanoyl-CoA = 1,2-di-(9Z)-octadecenoyl-3-hexadecanoyl-sn-glycerol + CoA. It carries out the reaction 1,3-di-(9Z-octadecenoyl)-glycerol + (9Z)-octadecenoyl-CoA = 1,2,3-tri-(9Z-octadecenoyl)-glycerol + CoA. It catalyses the reaction 2,3-di-(9Z)-octadecenoyl-sn-glycerol + (9Z)-octadecenoyl-CoA = 1,2,3-tri-(9Z-octadecenoyl)-glycerol + CoA. The catalysed reaction is 2-(9Z-octadecenoyl)-glycerol + hexadecanoyl-CoA = 1-hexadecanoyl-2-(9Z-octadecenoyl)-sn-glycerol + CoA. Its pathway is glycerolipid metabolism; triacylglycerol biosynthesis. Inhibited by niacin. Functionally, essential acyltransferase that catalyzes the terminal and only committed step in triacylglycerol synthesis by using diacylglycerol and fatty acyl CoA as substrates. Required for synthesis and storage of intracellular triglycerides. Probably plays a central role in cytosolic lipid accumulation. In liver, is primarily responsible for incorporating endogenously synthesized fatty acids into triglycerides. Also functions as an acyl-CoA retinol acyltransferase (ARAT). Also able to use 1-monoalkylglycerol (1-MAkG) as an acyl acceptor for the synthesis of monoalkyl-monoacylglycerol (MAMAG). This Homo sapiens (Human) protein is Diacylglycerol O-acyltransferase 2.